A 121-amino-acid polypeptide reads, in one-letter code: Prefoldin subunit beta (121 aa).

The protein belongs to the prefoldin subunit beta family. As to quaternary structure, heterohexamer of two alpha and four beta subunits.

The protein localises to the cytoplasm. Its function is as follows. Molecular chaperone capable of stabilizing a range of proteins. Seems to fulfill an ATP-independent, HSP70-like function in archaeal de novo protein folding. The sequence is that of Prefoldin subunit beta (pfdB) from Methanothermobacter thermautotrophicus (strain ATCC 29096 / DSM 1053 / JCM 10044 / NBRC 100330 / Delta H) (Methanobacterium thermoautotrophicum).